The primary structure comprises 287 residues: NH(3)-dependent NAD(+) synthetase (287 aa).

An ATP-binding site is contributed by 53–60 (GISGGQDS). Asp59 contacts Mg(2+). Arg146 lines the deamido-NAD(+) pocket. Residue Thr166 coordinates ATP. Glu171 contributes to the Mg(2+) binding site. Deamido-NAD(+) contacts are provided by Lys179 and Asp186. ATP contacts are provided by Lys195 and Thr217. Residue 266 to 267 (HK) participates in deamido-NAD(+) binding.

Belongs to the NAD synthetase family. As to quaternary structure, homodimer.

The catalysed reaction is deamido-NAD(+) + NH4(+) + ATP = AMP + diphosphate + NAD(+) + H(+). It functions in the pathway cofactor biosynthesis; NAD(+) biosynthesis; NAD(+) from deamido-NAD(+) (ammonia route): step 1/1. Its function is as follows. Catalyzes the ATP-dependent amidation of deamido-NAD to form NAD. Uses ammonia as a nitrogen source. The polypeptide is NH(3)-dependent NAD(+) synthetase (Deinococcus radiodurans (strain ATCC 13939 / DSM 20539 / JCM 16871 / CCUG 27074 / LMG 4051 / NBRC 15346 / NCIMB 9279 / VKM B-1422 / R1)).